Reading from the N-terminus, the 190-residue chain is Elongation factor P (190 aa).

This sequence belongs to the elongation factor P family.

It is found in the cytoplasm. Its pathway is protein biosynthesis; polypeptide chain elongation. Its function is as follows. Involved in peptide bond synthesis. Stimulates efficient translation and peptide-bond synthesis on native or reconstituted 70S ribosomes in vitro. Probably functions indirectly by altering the affinity of the ribosome for aminoacyl-tRNA, thus increasing their reactivity as acceptors for peptidyl transferase. The protein is Elongation factor P of Hyphomonas neptunium (strain ATCC 15444).